The chain runs to 51 residues: Large ribosomal subunit protein eL39 (51 aa).

It belongs to the eukaryotic ribosomal protein eL39 family.

This Thermococcus onnurineus (strain NA1) protein is Large ribosomal subunit protein eL39.